Reading from the N-terminus, the 71-residue chain is Exodeoxyribonuclease 7 small subunit (71 aa).

The protein belongs to the XseB family. As to quaternary structure, heterooligomer composed of large and small subunits.

Its subcellular location is the cytoplasm. It catalyses the reaction Exonucleolytic cleavage in either 5'- to 3'- or 3'- to 5'-direction to yield nucleoside 5'-phosphates.. Functionally, bidirectionally degrades single-stranded DNA into large acid-insoluble oligonucleotides, which are then degraded further into small acid-soluble oligonucleotides. This is Exodeoxyribonuclease 7 small subunit from Streptococcus suis (strain 98HAH33).